Reading from the N-terminus, the 207-residue chain is Small ribosomal subunit protein uS4 (207 aa).

The S4 RNA-binding domain occupies serine 97–valine 165.

Belongs to the universal ribosomal protein uS4 family. Part of the 30S ribosomal subunit. Contacts protein S5. The interaction surface between S4 and S5 is involved in control of translational fidelity.

In terms of biological role, one of the primary rRNA binding proteins, it binds directly to 16S rRNA where it nucleates assembly of the body of the 30S subunit. Functionally, with S5 and S12 plays an important role in translational accuracy. This Mycoplasmoides gallisepticum (strain R(low / passage 15 / clone 2)) (Mycoplasma gallisepticum) protein is Small ribosomal subunit protein uS4.